A 293-amino-acid chain; its full sequence is Protease HtpX (293 aa).

The next 2 membrane-spanning stretches (helical) occupy residues 4–24 (IALFLLTNLAVMVVFGLVLSL) and 34–54 (GLLIMALLFGFGGSFISLLMS). Zn(2+) is bound at residue H139. Residue E140 is part of the active site. H143 lines the Zn(2+) pocket. Helical transmembrane passes span 158–178 (VVNTFVIFISRIIAQIAAGFL) and 193–213 (LIYFAVATVLELVFGILASII). E222 is a binding site for Zn(2+).

The protein belongs to the peptidase M48B family. The cofactor is Zn(2+).

The protein localises to the cell inner membrane. The protein is Protease HtpX of Salmonella agona (strain SL483).